The following is a 341-amino-acid chain: Anthranilate phosphoribosyltransferase (341 aa).

Residues Gly-79, 82–83, Thr-87, 89–92, 107–115, and Ala-119 contribute to the 5-phospho-alpha-D-ribose 1-diphosphate site; these read GD, NIST, and KHGNRAASS. Residue Gly-79 coordinates anthranilate. Ser-91 contacts Mg(2+). Asn-110 contributes to the anthranilate binding site. Arg-165 contributes to the anthranilate binding site. Positions 224 and 225 each coordinate Mg(2+).

The protein belongs to the anthranilate phosphoribosyltransferase family. As to quaternary structure, homodimer. Mg(2+) serves as cofactor.

It catalyses the reaction N-(5-phospho-beta-D-ribosyl)anthranilate + diphosphate = 5-phospho-alpha-D-ribose 1-diphosphate + anthranilate. It participates in amino-acid biosynthesis; L-tryptophan biosynthesis; L-tryptophan from chorismate: step 2/5. Functionally, catalyzes the transfer of the phosphoribosyl group of 5-phosphorylribose-1-pyrophosphate (PRPP) to anthranilate to yield N-(5'-phosphoribosyl)-anthranilate (PRA). This is Anthranilate phosphoribosyltransferase from Lacticaseibacillus paracasei (strain ATCC 334 / BCRC 17002 / CCUG 31169 / CIP 107868 / KCTC 3260 / NRRL B-441) (Lactobacillus paracasei).